A 578-amino-acid polypeptide reads, in one-letter code: Proline--tRNA ligase (578 aa).

Belongs to the class-II aminoacyl-tRNA synthetase family. ProS type 1 subfamily. Homodimer.

It localises to the cytoplasm. It catalyses the reaction tRNA(Pro) + L-proline + ATP = L-prolyl-tRNA(Pro) + AMP + diphosphate. In terms of biological role, catalyzes the attachment of proline to tRNA(Pro) in a two-step reaction: proline is first activated by ATP to form Pro-AMP and then transferred to the acceptor end of tRNA(Pro). As ProRS can inadvertently accommodate and process non-cognate amino acids such as alanine and cysteine, to avoid such errors it has two additional distinct editing activities against alanine. One activity is designated as 'pretransfer' editing and involves the tRNA(Pro)-independent hydrolysis of activated Ala-AMP. The other activity is designated 'posttransfer' editing and involves deacylation of mischarged Ala-tRNA(Pro). The misacylated Cys-tRNA(Pro) is not edited by ProRS. This Burkholderia cenocepacia (strain ATCC BAA-245 / DSM 16553 / LMG 16656 / NCTC 13227 / J2315 / CF5610) (Burkholderia cepacia (strain J2315)) protein is Proline--tRNA ligase.